The chain runs to 230 residues: Sugar fermentation stimulation protein homolog (230 aa).

Belongs to the SfsA family.

The chain is Sugar fermentation stimulation protein homolog from Clostridium acetobutylicum (strain ATCC 824 / DSM 792 / JCM 1419 / IAM 19013 / LMG 5710 / NBRC 13948 / NRRL B-527 / VKM B-1787 / 2291 / W).